A 206-amino-acid chain; its full sequence is Reticulon-like protein B13 (206 aa).

Residues 16–206 (VEDIYLWRRK…GTEEKVKKSE (191 aa)) form the Reticulon domain. A run of 3 helical transmembrane segments spans residues 27 to 47 (LAFS…FYGF), 50 to 70 (ITIV…WGSL), and 134 to 154 (IGNL…GLTV).

Its subcellular location is the endoplasmic reticulum membrane. The polypeptide is Reticulon-like protein B13 (RTNLB13) (Arabidopsis thaliana (Mouse-ear cress)).